We begin with the raw amino-acid sequence, 322 residues long: Acetyl-coenzyme A carboxylase carboxyl transferase subunit alpha (322 aa).

The CoA carboxyltransferase C-terminal domain maps to 39 to 296 (DLTALKKQLI…HSKLVTELNY (258 aa)).

The protein belongs to the AccA family. Acetyl-CoA carboxylase is a heterohexamer composed of biotin carboxyl carrier protein (accB), biotin carboxylase (accC) and two subunits each of ACCase subunit alpha (accA) and ACCase subunit beta (accD).

It is found in the plastid. The protein localises to the chloroplast. It catalyses the reaction N(6)-carboxybiotinyl-L-lysyl-[protein] + acetyl-CoA = N(6)-biotinyl-L-lysyl-[protein] + malonyl-CoA. It participates in lipid metabolism; malonyl-CoA biosynthesis; malonyl-CoA from acetyl-CoA: step 1/1. Component of the acetyl coenzyme A carboxylase (ACC) complex. First, biotin carboxylase catalyzes the carboxylation of biotin on its carrier protein (BCCP) and then the CO(2) group is transferred by the carboxyltransferase to acetyl-CoA to form malonyl-CoA. The sequence is that of Acetyl-coenzyme A carboxylase carboxyl transferase subunit alpha from Antithamnion sp. (Red alga).